A 1070-amino-acid chain; its full sequence is Regulator of Ty1 transposition protein 107 (1070 aa).

BRCT domains are found at residues serine 2–valine 103, asparagine 117–phenylalanine 213, histidine 260–phenylalanine 352, and proline 369–tyrosine 453. At serine 304 the chain carries Phosphoserine. Threonine 532 carries the post-translational modification Phosphothreonine. The segment at serine 572–lysine 659 is disordered. Over residues aspartate 580–asparagine 592 the composition is skewed to basic and acidic residues. A phosphoserine mark is found at serine 591 and serine 593. Composition is skewed to basic and acidic residues over residues cysteine 603–threonine 615 and aspartate 622–glutamate 645. Residue serine 720 is modified to Phosphoserine. Residues asparagine 722–proline 731 are compositionally biased toward basic and acidic residues. Residues asparagine 722–proline 753 form a disordered region. The span at serine 735 to proline 753 shows a compositional bias: polar residues. Serine 800 and serine 806 each carry phosphoserine. 2 consecutive BRCT domains span residues phenylalanine 829–leucine 910 and glycine 934–serine 1049.

As to quaternary structure, forms a complex with the cullin-RING ligase (CRL) RTT101(MMS1-MMS22). Interacts with MMS22 and RTT101. Interacts with histone H2A; requires H2A to be phosphorylated (gamma-H2A). Interacts with RAD55. Post-translationally, phosphorylated by MEC1.

The protein resides in the nucleus. Required for resumption of chromosome replication after DNA damage, specifically in S phase. Is recruited to chromatin in the presence of RTT109 and RTT101 in response to stalled replication forks and acts as a scaffold during DNA repair. The chain is Regulator of Ty1 transposition protein 107 (RTT107) from Saccharomyces cerevisiae (strain ATCC 204508 / S288c) (Baker's yeast).